The sequence spans 391 residues: Tryptophan synthase beta chain (391 aa).

N6-(pyridoxal phosphate)lysine is present on lysine 84.

The protein belongs to the TrpB family. Tetramer of two alpha and two beta chains. Pyridoxal 5'-phosphate is required as a cofactor.

It carries out the reaction (1S,2R)-1-C-(indol-3-yl)glycerol 3-phosphate + L-serine = D-glyceraldehyde 3-phosphate + L-tryptophan + H2O. The protein operates within amino-acid biosynthesis; L-tryptophan biosynthesis; L-tryptophan from chorismate: step 5/5. Its function is as follows. The beta subunit is responsible for the synthesis of L-tryptophan from indole and L-serine. The sequence is that of Tryptophan synthase beta chain from Caldanaerobacter subterraneus subsp. tengcongensis (strain DSM 15242 / JCM 11007 / NBRC 100824 / MB4) (Thermoanaerobacter tengcongensis).